Consider the following 233-residue polypeptide: Antilisterial bacteriocin subtilosin biosynthesis protein AlbG (233 aa).

The next 5 helical transmembrane spans lie at 4 to 24 (STVF…FGWV), 46 to 66 (GLLA…LHYV), 116 to 136 (TYVM…FEIV), 145 to 165 (TPPI…LFYM), and 192 to 212 (IGWM…LAAI).

The protein localises to the cell membrane. Involved in the production of the bacteriocin subtilosin. The polypeptide is Antilisterial bacteriocin subtilosin biosynthesis protein AlbG (albG) (Bacillus subtilis).